The following is a 123-amino-acid chain: Potassium voltage-gated channel subfamily E member 2 (123 aa).

N-linked (GlcNAc...) asparagine glycans are attached at residues N6 and N29. Residues 49 to 69 (VILYLMVMIGMFSFIVVAILV) form a helical membrane-spanning segment. At 70–123 (STVKSKRREHSQHPYHQYIVEDWQEKYKSQILHLEDSKATIHENMGATGFTVSP) the chain is on the cytoplasmic side.

The protein belongs to the potassium channel KCNE family. As to quaternary structure, interacts with KCNB1. Associates with KCNH2/ERG1. May associate with KCNQ2 and KCNQ3. Associates with HCN1 and probably HCN2. Heteromultimer with KCNC2. Interacts with KCNC2. Interacts with KCNQ1. Forms a heterooligomer complex with KCNQ1 that targets to the membrane raft and leading to currents with an apparently instantaneous activation, a rapid deactivation process and a linear current-voltage relationship and decreases the amplitude of the outward current.

The protein localises to the cell membrane. Its subcellular location is the apical cell membrane. In terms of biological role, ancillary protein that functions as a regulatory subunit of the voltage-gated potassium (Kv) channel complex composed of pore-forming and potassium-conducting alpha subunits and of regulatory beta subunits. KCNE2 beta subunit modulates the gating kinetics and enhances stability of the channel complex. Alters the gating of the delayed rectifier Kv channel containing KCNB1 alpha subunit. Associates with KCNH2/HERG alpha subunit Kv channel to form the rapidly activating component of the delayed rectifying potassium current (IKr) in heart. May associate with KCNQ2 and/or KCNQ3 alpha subunits to modulate the native M-type current. May associate with HCN1 and HCN2 channel subunits to increase potassium current. Forms a heterooligomer complex with KCNQ1/KVLQT1 alpha subunits which leads to currents with an apparently instantaneous activation, a rapid deactivation process and a linear current-voltage relationship and decreases the amplitude of the outward current. KCNQ1-KCNE2 channel associates with Na(+)-coupled myo-inositol symporter in the apical membrane of choroid plexus epithelium and regulates the myo-inositol gradient between blood and cerebrospinal fluid with an impact on neuron excitability. The chain is Potassium voltage-gated channel subfamily E member 2 from Mus musculus (Mouse).